The primary structure comprises 491 residues: 1-aminocyclopropane-1-carboxylate synthase (491 aa).

K278 is subject to N6-(pyridoxal phosphate)lysine.

Belongs to the class-I pyridoxal-phosphate-dependent aminotransferase family. Homodimer. Pyridoxal 5'-phosphate serves as cofactor.

The catalysed reaction is S-adenosyl-L-methionine = 1-aminocyclopropane-1-carboxylate + S-methyl-5'-thioadenosine + H(+). Its pathway is alkene biosynthesis; ethylene biosynthesis via S-adenosyl-L-methionine; ethylene from S-adenosyl-L-methionine: step 1/2. In terms of biological role, catalyzes the formation of 1-aminocyclopropane-1-carboxylate, a direct precursor of ethylene in higher plants. The polypeptide is 1-aminocyclopropane-1-carboxylate synthase (ACS1) (Nicotiana tabacum (Common tobacco)).